The following is a 304-amino-acid chain: N-acetylmuramic acid 6-phosphate etherase (304 aa).

Residues 62 to 225 (IVTAFRQGGR…TTASMILMGK (164 aa)) form the SIS domain. Glu90 serves as the catalytic Proton donor. Glu121 is a catalytic residue.

The protein belongs to the GCKR-like family. MurNAc-6-P etherase subfamily. In terms of assembly, homodimer.

It catalyses the reaction N-acetyl-D-muramate 6-phosphate + H2O = N-acetyl-D-glucosamine 6-phosphate + (R)-lactate. It participates in amino-sugar metabolism; 1,6-anhydro-N-acetylmuramate degradation. The protein operates within amino-sugar metabolism; N-acetylmuramate degradation. Its pathway is cell wall biogenesis; peptidoglycan recycling. In terms of biological role, specifically catalyzes the cleavage of the D-lactyl ether substituent of MurNAc 6-phosphate, producing GlcNAc 6-phosphate and D-lactate. Together with AnmK, is also required for the utilization of anhydro-N-acetylmuramic acid (anhMurNAc) either imported from the medium or derived from its own cell wall murein, and thus plays a role in cell wall recycling. This Actinobacillus succinogenes (strain ATCC 55618 / DSM 22257 / CCUG 43843 / 130Z) protein is N-acetylmuramic acid 6-phosphate etherase.